Consider the following 320-residue polypeptide: ATP-dependent 6-phosphofructokinase (320 aa).

Gly12 lines the ATP pocket. Residues Arg22–Arg26 and Arg55–Asp60 each bind ADP. ATP is bound by residues Arg73 to Phe74 and Gly103 to Ser106. Asp104 is a binding site for Mg(2+). Substrate is bound at residue Thr126–Asp128. Catalysis depends on Asp128, which acts as the Proton acceptor. Residue Arg155 participates in ADP binding. Substrate is bound by residues Arg163 and Met170–Arg172. ADP contacts are provided by residues Gly186 to Glu188, Lys212, and Lys214 to His216. Substrate contacts are provided by residues Glu223, Arg244, and His250–Arg253.

It belongs to the phosphofructokinase type A (PFKA) family. ATP-dependent PFK group I subfamily. Prokaryotic clade 'B1' sub-subfamily. In terms of assembly, homotetramer. It depends on Mg(2+) as a cofactor.

The protein resides in the cytoplasm. The enzyme catalyses beta-D-fructose 6-phosphate + ATP = beta-D-fructose 1,6-bisphosphate + ADP + H(+). The protein operates within carbohydrate degradation; glycolysis; D-glyceraldehyde 3-phosphate and glycerone phosphate from D-glucose: step 3/4. With respect to regulation, allosterically activated by ADP and other diphosphonucleosides, and allosterically inhibited by phosphoenolpyruvate. In terms of biological role, catalyzes the phosphorylation of D-fructose 6-phosphate to fructose 1,6-bisphosphate by ATP, the first committing step of glycolysis. This is ATP-dependent 6-phosphofructokinase from Klebsiella pneumoniae (strain 342).